The following is a 264-amino-acid chain: Thiazole synthase (264 aa).

The active-site Schiff-base intermediate with DXP is the Lys-100. 1-deoxy-D-xylulose 5-phosphate is bound by residues Gly-161, 187–188, and 209–210; these read AG and NT.

The protein belongs to the ThiG family. Homotetramer. Forms heterodimers with either ThiH or ThiS.

The protein localises to the cytoplasm. It catalyses the reaction [ThiS sulfur-carrier protein]-C-terminal-Gly-aminoethanethioate + 2-iminoacetate + 1-deoxy-D-xylulose 5-phosphate = [ThiS sulfur-carrier protein]-C-terminal Gly-Gly + 2-[(2R,5Z)-2-carboxy-4-methylthiazol-5(2H)-ylidene]ethyl phosphate + 2 H2O + H(+). It participates in cofactor biosynthesis; thiamine diphosphate biosynthesis. In terms of biological role, catalyzes the rearrangement of 1-deoxy-D-xylulose 5-phosphate (DXP) to produce the thiazole phosphate moiety of thiamine. Sulfur is provided by the thiocarboxylate moiety of the carrier protein ThiS. In vitro, sulfur can be provided by H(2)S. This is Thiazole synthase from Nitrosospira multiformis (strain ATCC 25196 / NCIMB 11849 / C 71).